Reading from the N-terminus, the 316-residue chain is Adenine deaminase (316 aa).

The Zn(2+) site is built by H14, H16, and H194. The active-site Proton donor is E197. D275 serves as a coordination point for Zn(2+). Residue D276 participates in substrate binding.

This sequence belongs to the metallo-dependent hydrolases superfamily. Adenosine and AMP deaminases family. Adenine deaminase type 2 subfamily. Zn(2+) is required as a cofactor.

The catalysed reaction is adenine + H2O + H(+) = hypoxanthine + NH4(+). Catalyzes the hydrolytic deamination of adenine to hypoxanthine. Plays an important role in the purine salvage pathway and in nitrogen catabolism. The chain is Adenine deaminase from Pseudomonas paraeruginosa (strain DSM 24068 / PA7) (Pseudomonas aeruginosa (strain PA7)).